The sequence spans 692 residues: Protein artemis (692 aa).

Thr-380 is modified (phosphothreonine). A Phosphoserine modification is found at Ser-385. Disordered stretches follow at residues 504–555 (LENF…DSQS) and 640–664 (STNA…LPKR). Over residues 506–520 (NFPSSTVAGGSQSPK) the composition is skewed to polar residues. Residues 530-543 (THISSQNSSQSTHI) are compositionally biased toward low complexity. 2 stretches are compositionally biased toward polar residues: residues 544-555 (TEQGSQGWDSQS) and 640-650 (STNADSQSSSD). A Phosphoserine; by ATM modification is found at Ser-645.

The protein belongs to the DNA repair metallo-beta-lactamase (DRMBL) family. In terms of assembly, interacts with LIG4; the interaction is direct. Interacts with ATM. Interacts with BRCA1. Interacts with PRKDC. Interacts with TP53BP1. Also exhibits ATM- and phosphorylation-dependent interaction with the MRN complex, composed of MRE11, RAD50, and NBN. Phosphorylation on undefined residues by PRKDC may stimulate endonucleolytic activity on 5' and 3' hairpins and overhangs. PRKDC must remain present, even after phosphorylation, for efficient hairpin opening. Also phosphorylated by ATM in response to ionizing radiation (IR) and by ATR in response to ultraviolet (UV) radiation. Ubiquitously expressed, with highest levels in the kidney, lung, pancreas and placenta (at the mRNA level). Expression is not increased in thymus or bone marrow, sites of V(D)J recombination.

It localises to the nucleus. In terms of biological role, nuclease involved in DNA non-homologous end joining (NHEJ); required for double-strand break repair and V(D)J recombination. Required for V(D)J recombination, the process by which exons encoding the antigen-binding domains of immunoglobulins and T-cell receptor proteins are assembled from individual V, (D), and J gene segments. V(D)J recombination is initiated by the lymphoid specific RAG endonuclease complex, which generates site specific DNA double strand breaks (DSBs). These DSBs present two types of DNA end structures: hairpin sealed coding ends and phosphorylated blunt signal ends. These ends are independently repaired by the non homologous end joining (NHEJ) pathway to form coding and signal joints respectively. This protein exhibits single-strand specific 5'-3' exonuclease activity in isolation and acquires endonucleolytic activity on 5' and 3' hairpins and overhangs when in a complex with PRKDC. The latter activity is required specifically for the resolution of closed hairpins prior to the formation of the coding joint. Also required for the repair of complex DSBs induced by ionizing radiation, which require substantial end-processing prior to religation by NHEJ. The protein is Protein artemis of Homo sapiens (Human).